Here is a 123-residue protein sequence, read N- to C-terminus: Aspartate 1-decarboxylase (123 aa).

The Schiff-base intermediate with substrate; via pyruvic acid role is filled by S25. Position 25 is a pyruvic acid (Ser) (S25). T57 contributes to the substrate binding site. Y58 serves as the catalytic Proton donor. Residue G73–A75 participates in substrate binding.

This sequence belongs to the PanD family. Heterooctamer of four alpha and four beta subunits. Requires pyruvate as cofactor. Is synthesized initially as an inactive proenzyme, which is activated by self-cleavage at a specific serine bond to produce a beta-subunit with a hydroxyl group at its C-terminus and an alpha-subunit with a pyruvoyl group at its N-terminus.

The protein localises to the cytoplasm. The catalysed reaction is L-aspartate + H(+) = beta-alanine + CO2. Its pathway is cofactor biosynthesis; (R)-pantothenate biosynthesis; beta-alanine from L-aspartate: step 1/1. Functionally, catalyzes the pyruvoyl-dependent decarboxylation of aspartate to produce beta-alanine. The sequence is that of Aspartate 1-decarboxylase from Clostridium novyi (strain NT).